Reading from the N-terminus, the 384-residue chain is G protein-coupled receptor 88 (384 aa).

Residues Met1–Ser35 are Extracellular-facing. N-linked (GlcNAc...) asparagine glycosylation is present at Asn3. A helical membrane pass occupies residues Leu36–Val56. At Ser57–Gly73 the chain is on the cytoplasmic side. Residues Cys74–Leu94 traverse the membrane as a helical segment. At Pro95–Arg116 the chain is on the extracellular side. Residues Gly117–Leu136 form a helical membrane-spanning segment. Residues Asn137–Thr158 are Cytoplasmic-facing. Residues Ala159 to Trp179 traverse the membrane as a helical segment. Residues Ala180–Leu195 lie on the Extracellular side of the membrane. The chain crosses the membrane as a helical span at residues Leu196–Val216. At Arg217–Ser285 the chain is on the cytoplasmic side. The chain crosses the membrane as a helical span at residues Val286–Ala306. Over Ser307–Ser310 the chain is Extracellular. A helical membrane pass occupies residues Leu311–Leu331. Residues Asn332 to Trp384 are Cytoplasmic-facing.

It belongs to the G-protein coupled receptor 1 family. Expressed predominantly in the striatum. Expressed also in olfactory tubercle, nucleus accumbens, amygdala, and neocortex. Spinal cord, pons, and medulla expression remains discrete. Also expressed in peripheral tissues, including adrenal cortex (16 dpc to 21 dpc) and cochlear ganglia (19 dpc to P3) and also at moderate levels in retina (18 dpc to 19 dpc) and spleen (21 dpc to P7).

It localises to the cell membrane. The protein resides in the cell projection. Its subcellular location is the cilium membrane. It is found in the cytoplasm. The protein localises to the nucleus. In terms of biological role, orphan G protein-coupled receptor implicated in a large repertoire of behavioral responses that engage motor activities, spatial learning, and emotional processing. May play a role in the regulation of cognitive and motor function. Couples with the heterotrimeric G protein complex of the G(i) subfamily, consisting of GNAI1, GNB1 and GNG2, thereby acting through a G(i)-mediated pathway. Plays a role in the attenuation of D1 dopamine receptor (D1R)-mediated cAMP response in ciliated cells. In non-ciliated cells, involved in the inhibition of the beta-2 adrenergic receptor (B2AR) response. The sequence is that of G protein-coupled receptor 88 (Gpr88) from Rattus norvegicus (Rat).